A 474-amino-acid chain; its full sequence is UDP-N-acetylmuramate--L-alanine ligase (474 aa).

ATP is bound at residue 119-125; it reads GTHGKTT.

Belongs to the MurCDEF family.

The protein resides in the cytoplasm. It carries out the reaction UDP-N-acetyl-alpha-D-muramate + L-alanine + ATP = UDP-N-acetyl-alpha-D-muramoyl-L-alanine + ADP + phosphate + H(+). It functions in the pathway cell wall biogenesis; peptidoglycan biosynthesis. In terms of biological role, cell wall formation. This Jannaschia sp. (strain CCS1) protein is UDP-N-acetylmuramate--L-alanine ligase.